A 388-amino-acid polypeptide reads, in one-letter code: Succinate--CoA ligase [ADP-forming] subunit beta (388 aa).

Residues 9–244 (KEILRKYNVP…LDEEDANEIE (236 aa)) enclose the ATP-grasp domain. Residues Lys-46, 53–55 (GRG), Glu-99, Ala-102, and Glu-107 each bind ATP. Residues Asn-199 and Asp-213 each contribute to the Mg(2+) site. Residues Asn-264 and 321 to 323 (GIM) contribute to the substrate site.

The protein belongs to the succinate/malate CoA ligase beta subunit family. Heterotetramer of two alpha and two beta subunits. Mg(2+) serves as cofactor.

The catalysed reaction is succinate + ATP + CoA = succinyl-CoA + ADP + phosphate. The enzyme catalyses GTP + succinate + CoA = succinyl-CoA + GDP + phosphate. It functions in the pathway carbohydrate metabolism; tricarboxylic acid cycle; succinate from succinyl-CoA (ligase route): step 1/1. Functionally, succinyl-CoA synthetase functions in the citric acid cycle (TCA), coupling the hydrolysis of succinyl-CoA to the synthesis of either ATP or GTP and thus represents the only step of substrate-level phosphorylation in the TCA. The beta subunit provides nucleotide specificity of the enzyme and binds the substrate succinate, while the binding sites for coenzyme A and phosphate are found in the alpha subunit. This Cupriavidus taiwanensis (strain DSM 17343 / BCRC 17206 / CCUG 44338 / CIP 107171 / LMG 19424 / R1) (Ralstonia taiwanensis (strain LMG 19424)) protein is Succinate--CoA ligase [ADP-forming] subunit beta.